We begin with the raw amino-acid sequence, 450 residues long: LanC-like protein 2 (450 aa).

Gly2 carries the N-myristoyl glycine lipid modification. The interaction with inositol phospholipids stretch occupies residues 2–14 (GETMSKRLKFHLG). At Tyr198 the chain carries Phosphotyrosine.

The protein belongs to the LanC-like protein family. As to quaternary structure, interacts with an array of inositol phospholipids such as phosphatidylinositol 3-phosphate (PI3P), phosphatidylinositol 4-phosphate (PI4P) and phosphatidylinositol 5-phosphate (PI5P). PIP-binding enhances membrane association. Post-translationally, myristoylated. Essential for membrane association.

The protein localises to the nucleus. It localises to the cytoplasm. It is found in the cell membrane. Functionally, necessary for abscisic acid (ABA) binding on the cell membrane and activation of the ABA signaling pathway in granulocytes. This chain is LanC-like protein 2 (Lancl2), found in Mus musculus (Mouse).